Here is a 688-residue protein sequence, read N- to C-terminus: Transcriptional regulatory protein GAT1 (688 aa).

5 disordered regions span residues 83-125 (NHNS…SPMI), 259-278 (TSASITSPTSTFSNQGNNSS), 343-438 (FTGI…GVSC), 482-565 (IKKR…NLDK), and 639-678 (LMTMHQSSHQSSLSTTFDHEVESNNEGSNSSGVNTSTANN). Over residues 259 to 271 (TSASITSPTSTFS) the composition is skewed to low complexity. The span at 359–368 (FDNKPKDDHF) shows a compositional bias: basic and acidic residues. Polar residues predominate over residues 369 to 379 (NTSLSVSQQQP). A compositionally biased stretch (basic residues) spans 382 to 397 (KKSKRKSTITKSKKKA). Residues 402 to 428 (TTITSTGSTITTKSTNSNSTGKGTATG) are compositionally biased toward low complexity. The GATA-type zinc-finger motif lies at 438–462 (CTNCGTKTTPLWRRNPQGQPLCNAC). 5 stretches are compositionally biased toward low complexity: residues 488-510 (GNNNGSGNSSGTTNNSNNYNNKS), 529-543 (TNNTGLTNNNNSKSP), 552-565 (FDNNSNSALNNLDK), 639-654 (LMTMHQSSHQSSLSTT), and 662-678 (NNEGSNSSGVNTSTANN).

The protein localises to the nucleus. Functionally, transcriptional regulator of nitrogen utilization required for nitrogen catabolite repression and utilization of isoleucine, tyrosine and tryptophan as nitrogen sources. Controls expression of the MEP2 ammonium permease, the DUR1,2 urea amidolyase, and the transcription factor STP1, which in turn mediates SAP2 expression, a long-known virulence attribute of C.albicans. Influences the filamentation process depending upon the nitrogen sources available. Required for virulence in a mouse systemic infection model. The protein is Transcriptional regulatory protein GAT1 (GAT1) of Candida albicans (strain SC5314 / ATCC MYA-2876) (Yeast).